Here is a 122-residue protein sequence, read N- to C-terminus: Nuclear transport factor 2A (122 aa).

Met1 is modified (N-acetylmethionine). Residues 6 to 119 (VAKAFVEHYY…YYVFNDIFRL (114 aa)) form the NTF2 domain.

In terms of assembly, interacts with RAN1. In terms of tissue distribution, expressed in roots, stems, leaves and flowers, and, at low levels, in siliques.

Its subcellular location is the cytoplasm. It localises to the nucleus. It is found in the nucleus envelope. In terms of biological role, facilitates protein transport into the nucleus. Interacts with various nucleoporins and with Ran-GDP. Could be part of a multicomponent system of cytosolic factors that assemble at the pore complex during nuclear import. This chain is Nuclear transport factor 2A, found in Arabidopsis thaliana (Mouse-ear cress).